The primary structure comprises 156 residues: ATP synthase subunit b (156 aa).

A helical transmembrane segment spans residues 4 to 26 (GATFWGPMISFALFVWFTMKFVW).

Belongs to the ATPase B chain family. As to quaternary structure, F-type ATPases have 2 components, F(1) - the catalytic core - and F(0) - the membrane proton channel. F(1) has five subunits: alpha(3), beta(3), gamma(1), delta(1), epsilon(1). F(0) has three main subunits: a(1), b(2) and c(10-14). The alpha and beta chains form an alternating ring which encloses part of the gamma chain. F(1) is attached to F(0) by a central stalk formed by the gamma and epsilon chains, while a peripheral stalk is formed by the delta and b chains.

The protein resides in the cell inner membrane. Its function is as follows. F(1)F(0) ATP synthase produces ATP from ADP in the presence of a proton or sodium gradient. F-type ATPases consist of two structural domains, F(1) containing the extramembraneous catalytic core and F(0) containing the membrane proton channel, linked together by a central stalk and a peripheral stalk. During catalysis, ATP synthesis in the catalytic domain of F(1) is coupled via a rotary mechanism of the central stalk subunits to proton translocation. Functionally, component of the F(0) channel, it forms part of the peripheral stalk, linking F(1) to F(0). This chain is ATP synthase subunit b, found in Halorhodospira halophila (strain DSM 244 / SL1) (Ectothiorhodospira halophila (strain DSM 244 / SL1)).